We begin with the raw amino-acid sequence, 368 residues long: Ubl carboxyl-terminal hydrolase 18 (368 aa).

A mediates interaction with IFNAR2 region spans residues 31–48 (MKRKRVLSRDLCSAWDSP). The interval 48-109 (PHGLVGLHNI…LLLLLEKMQD (62 aa)) is mediates interaction with STAT2. Residues 52–366 (VGLHNIGQTC…TAYLLVYTKT (315 aa)) form the USP domain. Cys61 (nucleophile) is an active-site residue. The segment at 299–308 (ELFAVIAHVG) is mediates interaction with STAT2 and necessary for the negative regulation of the type I IFN signaling pathway. Positions 309–368 (MADFGHYCAYIRNPVDGKWFCFNDSHVCWVTWKDVQCTYGNHRYRWRETAYLLVYTKTGS) are mediates interaction with IFNAR2. His314 (proton acceptor) is an active-site residue.

The protein belongs to the peptidase C19 family. In terms of assembly, interacts with STAT2; the interaction is direct. Interacts with IFNAR2; indirectly via STAT2, it negatively regulates the assembly of the ternary interferon-IFNAR1-IFNAR2 complex and inhibits type I interferon signaling. Interacts with STING1. Interacts with USP20.

The enzyme catalyses Thiol-dependent hydrolysis of ester, thioester, amide, peptide and isopeptide bonds formed by the C-terminal Gly of ubiquitin (a 76-residue protein attached to proteins as an intracellular targeting signal).. Functionally, interferon-induced ISG15-specific protease that plays a crucial role for maintaining a proper balance of ISG15-conjugated proteins in cells. Regulates protein ISGylation by efficiently cleaving ISG15 conjugates linked via isopeptide bonds. Regulates T-cell activation and T-helper 17 (Th17) cell differentiation by deubiquitinating TAK1, likely to keep TAK1-TAB complexes in steady conditions. In turn, restricts activation of NF-kappa-B, NFAT, and JNK as well as expression of IL2 in T-cells after TCR activation. Acts as a molecular adapter with USP20 to promote innate antiviral response through deubiquitinating STING1. Involved also in the negative regulation of the inflammatory response triggered by type I interferon. Upon recruitment by STAT2 to the type I interferon receptor subunit IFNAR2 interferes with the assembly of the ternary interferon-IFNAR1-IFNAR2 complex and acts as a negative regulator of the type I interferon signaling pathway. In Mus musculus (Mouse), this protein is Ubl carboxyl-terminal hydrolase 18 (Usp18).